The sequence spans 2067 residues: Nuclear receptor coactivator 6 (2067 aa).

The TBP/GTF2A-binding region stretch occupies residues 1–932; that stretch reads MVLDDLPNFE…PPRKKKNCHQ (932 aa). Residues 1–1060 form a CREBBP-binding region region; that stretch reads MVLDDLPNFE…LPVSQNVHPP (1060 aa). The NCOA1-binding region stretch occupies residues 1–1314; that stretch reads MVLDDLPNFE…QAHKLDSVVV (1314 aa). The residue at position 95 (Arg-95) is an Asymmetric dimethylarginine. Disordered regions lie at residues 181-253 and 293-548; these read AVMT…RQMN and TRPL…PGNS. Low complexity predominate over residues 293–304; that stretch reads TRPLQQHQQQPQ. 6 stretches are compositionally biased toward polar residues: residues 338-347, 357-372, 383-405, 421-457, 465-506, and 526-548; these read SLGTMTTNQG, MQAQ…TVQT, GSQQ…QFTA, PLQQ…QQQM, NPLS…QGPQ, and GQAN…PGNS. The segment at 777-931 is NCOA6IP-binding region; the sequence is VNNSPSQVMG…KPPRKKKNCH (155 aa). Ser-888 is modified (phosphoserine). An LXXLL motif 1 motif is present at residues 891–895; it reads LVNLL. 5 disordered regions span residues 903–1279, 1313–1358, 1424–1481, 1497–1581, and 1769–1822; these read HFGV…QGLN, VVNS…APKL, NIPQ…EENK, QLLD…IPPV, and LNPD…GKGK. A compositionally biased stretch (low complexity) spans 907–916; that stretch reads NNKQNNTNAN. The span at 917 to 929 shows a compositional bias: basic residues; it reads KPKKKKPPRKKKN. Low complexity predominate over residues 984 to 996; the sequence is QRPLPQMPPQLMQ. Residues 999 to 1024 show a composition bias toward pro residues; it reads APPPQPPQQQPQPQLPQQQQPPPPSQ. Positions 1025-1044 are enriched in low complexity; it reads PQSQQQQQQQQMMMMLMMQQ. Asymmetric dimethylarginine is present on residues Arg-1050 and Arg-1061. A compositionally biased stretch (polar residues) spans 1066–1078; it reads PDSQRMPVQQSGN. At Arg-1099 the chain carries Asymmetric dimethylarginine. Positions 1103–1123 are enriched in polar residues; sequence SVNTPMGSNSRKMVYQENPQN. Low complexity predominate over residues 1124–1137; it reads SSSSPLGEMSSLPE. 3 stretches are compositionally biased toward polar residues: residues 1152–1165, 1176–1194, and 1205–1217; these read NMPS…NQLM, LSAT…SLPS, and APTQ…TPNR. Residues 1222–1235 are compositionally biased toward pro residues; sequence PYYPQTPNNRPPST. The span at 1313-1324 shows a compositional bias: polar residues; it reads VVNSGKQSNPGT. Residues 1326–1349 show a composition bias toward low complexity; sequence KRASPSNSRRSSPGSSRKTTPSPG. Polar residues predominate over residues 1424 to 1435; it reads NIPQDSDCQNAQ. The LXXLL motif 2 signature appears at 1495 to 1499; sequence LSQLL. Residues 1545–1562 show a composition bias toward low complexity; that stretch reads EPSTSLSSPHSSEPCSTL. An EP300/CRSP3-binding region region spans residues 1644–2067; the sequence is SEGQSAAQSN…AVQSKRRKSK (424 aa). Positions 1775–1805 are enriched in polar residues; that stretch reads SPQTNTSADQSTLPPSQPTTVVSSLLTNSPG. Residues 1806–1818 show a composition bias toward low complexity; that stretch reads SSANRRSPVSSSK. Lys-1822 and Lys-1825 each carry N6-acetyllysine. Disordered regions lie at residues 1840 to 1911 and 1957 to 2067; these read GSLE…LPGG and VGSH…RKSK. The segment covering 1871–1883 has biased composition (polar residues); it reads EQCSTELDSKTPT. Over residues 1892–1904 the composition is skewed to low complexity; it reads MTSSPMAPSSTST. The segment covering 2005–2014 has biased composition (basic and acidic residues); it reads EPKEIVEKSK. Ser-2022 carries the post-translational modification Phosphoserine.

Monomer and homodimer. Interacts in vitro with the basal transcription factors GTF2A and TBP, suggesting an autonomous transactivation function. Interacts with NCOA1, CRSP3, RBM14, the histone acetyltransferase proteins EP300 and CREBBP, and with methyltransferase proteins NCOA6IP and PRMT2. Interacts with RBM39. Component of the MLL2/3 complex (also named ASCOM complex), at least composed of KMT2D/MLL2 or KMT2C/MLL3, ASH2L, RBBP5, WDR5, NCOA6, DPY30, KDM6A, PAXIP1/PTIP, PAGR1 and alpha- and beta-tubulin. Interacts with ZNF335; may enhance ligand-dependent transcriptional activation by nuclear hormone receptors. Phosphorylated. As to expression, widely expressed. High expression in testis and weak expression in small intestine.

It localises to the nucleus. In terms of biological role, nuclear receptor coactivator that directly binds nuclear receptors and stimulates the transcriptional activities in a hormone-dependent fashion. Coactivates expression in an agonist- and AF2-dependent manner. Involved in the coactivation of different nuclear receptors, such as for steroids (GR and ERs), retinoids (RARs and RXRs), thyroid hormone (TRs), vitamin D3 (VDR) and prostanoids (PPARs). Probably functions as a general coactivator, rather than just a nuclear receptor coactivator. May also be involved in the coactivation of the NF-kappa-B pathway. May coactivate expression via a remodeling of chromatin and its interaction with histone acetyltransferase proteins. Involved in placental, cardiac, hepatic and embryonic development. In Mus musculus (Mouse), this protein is Nuclear receptor coactivator 6 (Ncoa6).